Reading from the N-terminus, the 2410-residue chain is Cell wall alpha-1,3-glucan synthase ags1 (2410 aa).

Residues serine 1643, serine 1644, and serine 1651 each carry the phosphoserine modification. Residue threonine 1653 is modified to Phosphothreonine. A disordered region spans residues 1685–1706 (SLSLGSRRGPGHTTEDDASDGL). Serine 1738 and serine 1812 each carry phosphoserine. A disordered region spans residues 1796 to 1827 (QDDLSDPARSVDSDSVSPPLPPFVAGSNPNAR). Over residues 1802–1827 (PARSVDSDSVSPPLPPFVAGSNPNAR) the composition is skewed to low complexity.

The protein belongs to the glycosyltransferase group 1 family. In terms of assembly, interacts with sad1.

It catalyses the reaction [(1-&gt;3)-alpha-D-glucosyl](n) + UDP-alpha-D-glucose = [(1-&gt;3)-alpha-D-glucosyl](n+1) + UDP + H(+). Functionally, required for alpha-1,3-glucan and alpha-1,4-glucan production which are required for cell wall synthesis. The protein is Cell wall alpha-1,3-glucan synthase ags1 (ags1) of Schizosaccharomyces pombe (strain 972 / ATCC 24843) (Fission yeast).